A 438-amino-acid polypeptide reads, in one-letter code: Glutamate-1-semialdehyde 2,1-aminomutase (438 aa).

N6-(pyridoxal phosphate)lysine is present on Lys274.

The protein belongs to the class-III pyridoxal-phosphate-dependent aminotransferase family. HemL subfamily. In terms of assembly, homodimer. Pyridoxal 5'-phosphate serves as cofactor.

Its subcellular location is the cytoplasm. It carries out the reaction (S)-4-amino-5-oxopentanoate = 5-aminolevulinate. It participates in porphyrin-containing compound metabolism; protoporphyrin-IX biosynthesis; 5-aminolevulinate from L-glutamyl-tRNA(Glu): step 2/2. This is Glutamate-1-semialdehyde 2,1-aminomutase from Salinibacter ruber (strain DSM 13855 / M31).